The chain runs to 290 residues: N-acetylmannosamine kinase (290 aa).

ATP contacts are provided by residues 6–13 and 132–139; these read ALDIGGTK and GVGGGIIL. His-156, Cys-166, Cys-168, and Cys-173 together coordinate Zn(2+).

Belongs to the ROK (NagC/XylR) family. NanK subfamily. Homodimer.

It carries out the reaction an N-acyl-D-mannosamine + ATP = an N-acyl-D-mannosamine 6-phosphate + ADP + H(+). It participates in amino-sugar metabolism; N-acetylneuraminate degradation; D-fructose 6-phosphate from N-acetylneuraminate: step 2/5. In terms of biological role, catalyzes the phosphorylation of N-acetylmannosamine (ManNAc) to ManNAc-6-P. This chain is N-acetylmannosamine kinase, found in Yersinia pseudotuberculosis serotype O:1b (strain IP 31758).